A 215-amino-acid polypeptide reads, in one-letter code: High frequency lysogenization protein HflD homolog (215 aa).

Belongs to the HflD family.

It is found in the cytoplasm. The protein localises to the cell inner membrane. This Haemophilus ducreyi (strain 35000HP / ATCC 700724) protein is High frequency lysogenization protein HflD homolog.